Consider the following 549-residue polypeptide: DDB1- and CUL4-associated factor 11 (549 aa).

A compositionally biased stretch (low complexity) spans 1–24 (MGSRNSSSAGSGSLEPSEGLSRRG). The interval 1 to 40 (MGSRNSSSAGSGSLEPSEGLSRRGAGLRRSEEEEEEDEDV) is disordered. Ser-73 and Ser-75 each carry phosphoserine. Residues 80–89 (DSAWDGRLGD) are compositionally biased toward basic and acidic residues. The segment at 80-100 (DSAWDGRLGDRYNPPVDATPD) is disordered. WD repeat units follow at residues 170–210 (TYSQ…HKFK), 216–258 (DVGW…TALD), 263–302 (ERRF…RTLQ), 305–345 (SHED…EDDP), 353–392 (GHQD…SREG), 435–480 (GVLH…KKLT), and 481–520 (NHKA…YFQD).

As to quaternary structure, interacts with DDB1 and CUL4A.

The protein operates within protein modification; protein ubiquitination. Functionally, may function as a substrate receptor for CUL4-DDB1 E3 ubiquitin-protein ligase complex. The chain is DDB1- and CUL4-associated factor 11 (Dcaf11) from Rattus norvegicus (Rat).